Consider the following 465-residue polypeptide: Soluble pyridine nucleotide transhydrogenase (465 aa).

Residue 36–45 coordinates FAD; the sequence is ERYNNVGGGC.

Belongs to the class-I pyridine nucleotide-disulfide oxidoreductase family. FAD serves as cofactor.

The protein localises to the cytoplasm. The enzyme catalyses NAD(+) + NADPH = NADH + NADP(+). Functionally, conversion of NADPH, generated by peripheral catabolic pathways, to NADH, which can enter the respiratory chain for energy generation. This chain is Soluble pyridine nucleotide transhydrogenase, found in Serratia proteamaculans (strain 568).